Here is a 767-residue protein sequence, read N- to C-terminus: MTISPPERGSDAKSQVEKVDNPATFELFGKPGHFDRALAKGPKTTSWVWNLHANAHDFDAHTSDLQEVSRRIFSAHFGHLAVIFIWLSGAFFHGARFSNYSGWLADPTHVKPSAQVVWPIFGQEILNGDMGAGFQGIQITSGLFHVWRGWGITSETQLMALAIGALVMAGLMLNAGVFHYHKAAPKLEWFQNVESMLNHHLAGLLGLGSLSWAGHLIHVSAPVSKLMDAIDAGQPLVLDGKTIATVADIPLPHEFFNQDLLAQLYPGIGAGIGAFFSGNWAAYSDFLTFKGGLNPVTGSLWMTDIAHHHVAIAVLFIVAGHMYRTNWGIGHSIKEIHEGQKGDPLLFPAPNGHDGLYEFLTTSWHAQLGLNLAMLGSLSIIVAQHMYAMPPYAYMAVDYPTQIGLFTHHMWIGGFLIVGGAAHAAIAMVRDYDPAKHIDNVLDRVLKARDAIISHLNWVCIWLGAHSFGLYIHNDTMRALGRPQDMFSDSAISIQPIFAQWIQNAHAAAAGSTAPNALAGVSEVFNGSVVAVGGKVAAAPMPLGTADFMVHHIHAFTIHVTVLILLKGVLYARSSRLIPDKANLGFRFSCDGPGRGGTCQVSAWDHVFLGLFWMYNSLSIVIFHFSWKMQSDIWGTVNADGSVAHITNGNFAQSAITINGWLRDYLWAQAVQVINSYGSNTSAYGIMFLGAHFIWAFSLMFLFSGRGYWQELIESIVWAHNKLKVAPAIQPRALSIIQGRAVGVAHYLLGGIATTWAFFHAHILVVG.

Transmembrane regions (helical) follow at residues 72–95 (IFSA…FHGA), 158–181 (LMAL…FHYH), 197–221 (LNHH…HVSA), 305–323 (IAHH…GHMY), 364–387 (WHAQ…QHMY), 403–429 (IGLF…IAMV), 451–473 (AIIS…LYIH), and 548–566 (FMVH…LILL). Residues cysteine 590 and cysteine 599 each coordinate [4Fe-4S] cluster. 2 consecutive transmembrane segments (helical) span residues 606-627 (HVFL…HFSW) and 681-703 (TSAY…MFLF). Residue histidine 692 participates in chlorophyll a' binding. Chlorophyll a-binding residues include methionine 700 and tyrosine 708. Residue tryptophan 709 participates in phylloquinone binding. A helical membrane pass occupies residues 741 to 761 (AVGVAHYLLGGIATTWAFFHA).

It belongs to the PsaA/PsaB family. The PsaA/B heterodimer binds the P700 chlorophyll special pair and subsequent electron acceptors. PSI consists of a core antenna complex that captures photons, and an electron transfer chain that converts photonic excitation into a charge separation. The cyanobacterial PSI reaction center is composed of one copy each of PsaA,B,C,D,E,F,I,J,K,L,M and X, and forms trimeric complexes. PSI electron transfer chain: 5 chlorophyll a, 1 chlorophyll a', 2 phylloquinones and 3 4Fe-4S clusters. PSI core antenna: 90 chlorophyll a, 22 carotenoids, 3 phospholipids and 1 galactolipid. P700 is a chlorophyll a/chlorophyll a' dimer, A0 is one or more chlorophyll a, A1 is one or both phylloquinones and FX is a shared 4Fe-4S iron-sulfur center. serves as cofactor.

Its subcellular location is the cellular thylakoid membrane. It catalyses the reaction reduced [plastocyanin] + hnu + oxidized [2Fe-2S]-[ferredoxin] = oxidized [plastocyanin] + reduced [2Fe-2S]-[ferredoxin]. In terms of biological role, psaA and PsaB bind P700, the primary electron donor of photosystem I (PSI), as well as the electron acceptors A0, A1 and FX. PSI is a plastocyanin/cytochrome c6-ferredoxin oxidoreductase, converting photonic excitation into a charge separation, which transfers an electron from the donor P700 chlorophyll pair to the spectroscopically characterized acceptors A0, A1, FX, FA and FB in turn. Oxidized P700 is reduced on the lumenal side of the thylakoid membrane by plastocyanin or cytochrome c6. The protein is Photosystem I P700 chlorophyll a apoprotein A1 of Parasynechococcus marenigrum (strain WH8102).